Reading from the N-terminus, the 214-residue chain is Phosphatidylserine decarboxylase proenzyme (214 aa).

The active-site Schiff-base intermediate with substrate; via pyruvic acid is the Ser-182. Pyruvic acid (Ser); by autocatalysis is present on Ser-182.

The protein belongs to the phosphatidylserine decarboxylase family. PSD-A subfamily. Heterodimer of a large membrane-associated beta subunit and a small pyruvoyl-containing alpha subunit. Pyruvate serves as cofactor. In terms of processing, is synthesized initially as an inactive proenzyme. Formation of the active enzyme involves a self-maturation process in which the active site pyruvoyl group is generated from an internal serine residue via an autocatalytic post-translational modification. Two non-identical subunits are generated from the proenzyme in this reaction, and the pyruvate is formed at the N-terminus of the alpha chain, which is derived from the carboxyl end of the proenzyme. The post-translation cleavage follows an unusual pathway, termed non-hydrolytic serinolysis, in which the side chain hydroxyl group of the serine supplies its oxygen atom to form the C-terminus of the beta chain, while the remainder of the serine residue undergoes an oxidative deamination to produce ammonia and the pyruvoyl prosthetic group on the alpha chain.

It is found in the cell membrane. It carries out the reaction a 1,2-diacyl-sn-glycero-3-phospho-L-serine + H(+) = a 1,2-diacyl-sn-glycero-3-phosphoethanolamine + CO2. Its pathway is phospholipid metabolism; phosphatidylethanolamine biosynthesis; phosphatidylethanolamine from CDP-diacylglycerol: step 2/2. Catalyzes the formation of phosphatidylethanolamine (PtdEtn) from phosphatidylserine (PtdSer). The chain is Phosphatidylserine decarboxylase proenzyme from Burkholderia lata (strain ATCC 17760 / DSM 23089 / LMG 22485 / NCIMB 9086 / R18194 / 383).